Here is a 271-residue protein sequence, read N- to C-terminus: Tryptophan synthase alpha chain (271 aa).

Active-site proton acceptor residues include E49 and D60.

The protein belongs to the TrpA family. Tetramer of two alpha and two beta chains.

The catalysed reaction is (1S,2R)-1-C-(indol-3-yl)glycerol 3-phosphate + L-serine = D-glyceraldehyde 3-phosphate + L-tryptophan + H2O. Its pathway is amino-acid biosynthesis; L-tryptophan biosynthesis; L-tryptophan from chorismate: step 5/5. In terms of biological role, the alpha subunit is responsible for the aldol cleavage of indoleglycerol phosphate to indole and glyceraldehyde 3-phosphate. This chain is Tryptophan synthase alpha chain, found in Burkholderia multivorans (strain ATCC 17616 / 249).